The primary structure comprises 356 residues: NAC domain-containing protein JA2L (356 aa).

One can recognise an NAC domain in the interval Leu-14–Lys-162. Residues Val-111–Lys-168 mediate DNA binding. Residues Asn-163–Phe-191 are disordered. Over residues Ser-164–Leu-174 the composition is skewed to polar residues.

As to expression, expressed in guard cells of the epidermis.

The protein localises to the nucleus. Transcription factor that acts downstream of MYC2 in the jasmonate-mediated response to Botrytis cinerea infection. With MYC2 forms a transcription module that regulates wounding-responsive genes. Involved in jasmonate- and coronatine-mediated stomatal reopening in response to Pseudomonas syringae pv tomato DC3000 infection. Regulates the expression of threonine deaminase 2 (TD2) through promoter binding. This chain is NAC domain-containing protein JA2L, found in Solanum lycopersicum (Tomato).